The chain runs to 54 residues: UPF0391 membrane protein Tbd_2238 (54 aa).

Transmembrane regions (helical) follow at residues 5 to 25 and 28 to 48; these read ALVFFIIAIVAAVFGFSGIAA and VGIAKILFVVFLIMAIATFVV.

The protein belongs to the UPF0391 family.

The protein localises to the cell membrane. The sequence is that of UPF0391 membrane protein Tbd_2238 from Thiobacillus denitrificans (strain ATCC 25259 / T1).